A 299-amino-acid chain; its full sequence is Protoheme IX farnesyltransferase (299 aa).

8 helical membrane passes run 24-44 (VVAL…DQGM), 46-66 (WNAL…AAAI), 94-114 (VHAL…LAWG), 118-138 (LTAW…TLFL), 146-166 (IVLG…SVTG), 172-192 (ALLL…ALAV), 232-252 (LPFI…ALGV), and 278-298 (ITYL…PVTL).

The protein belongs to the UbiA prenyltransferase family. Protoheme IX farnesyltransferase subfamily.

The protein resides in the cell inner membrane. The catalysed reaction is heme b + (2E,6E)-farnesyl diphosphate + H2O = Fe(II)-heme o + diphosphate. The protein operates within porphyrin-containing compound metabolism; heme O biosynthesis; heme O from protoheme: step 1/1. Converts heme B (protoheme IX) to heme O by substitution of the vinyl group on carbon 2 of heme B porphyrin ring with a hydroxyethyl farnesyl side group. This chain is Protoheme IX farnesyltransferase, found in Hahella chejuensis (strain KCTC 2396).